The sequence spans 339 residues: Probable cytosolic iron-sulfur protein assembly protein CIAO1 (339 aa).

WD repeat units follow at residues 14–53, 59–98, 103–142, 148–187, 192–231, 250–289, and 301–339; these read HPDS…WICK, GHQR…FECV, GHEN…EYEC, SHTQ…WVCC, GHES…NEQG, FHSR…DPQQ, and AHSQ…SEGI. The short motif at 176-178 is the LYR motif; required for interaction with HSC20 element; that stretch reads LYR.

This sequence belongs to the WD repeat CIA1 family. Component of the CIA complex. Interacts with CIAO2A and forms a complex with CIAO2B and MMS19; the interactions with CIAO2A and CIAO2B are mutually exclusive. Interacts with CHD1L, ERCC2, IREB2 and POLD1. Component of the MMXD complex, which includes CIAO1, ERCC2, CIAO2B, MMS19 and SLC25A5. Interacts with WT1. Interacts with CIAO3. Interacts (via LYR motif) with HSC20.

Its subcellular location is the cytoplasm. Key component of the cytosolic iron-sulfur protein assembly (CIA) complex, a multiprotein complex that mediates the incorporation of iron-sulfur cluster into extramitochondrial Fe/S proteins. As a CIA complex component, interacts specifically with CIAO2A or CIAO2B and MMS19 to assist different branches of iron-sulfur protein assembly, depending of its interactors. The complex CIAO1:CIAO2B:MMS19 binds to and facilitates the assembly of most cytosolic-nuclear Fe/S proteins. CIAO1:CIAO2A specifically matures ACO1 and stabilizes IREB2. Seems to specifically modulate the transactivation activity of WT1. As part of the mitotic spindle-associated MMXD complex it may play a role in chromosome segregation. This chain is Probable cytosolic iron-sulfur protein assembly protein CIAO1, found in Bos taurus (Bovine).